The chain runs to 471 residues: Arginine biosynthesis bifunctional protein ArgJ, mitochondrial (471 aa).

The substrate site is built by threonine 201, lysine 230, threonine 241, glutamate 328, asparagine 466, and threonine 471. Threonine 241 functions as the Nucleophile in the catalytic mechanism.

Belongs to the ArgJ family. Heterodimer of an alpha and a beta chain. In terms of processing, the alpha and beta chains are autoproteolytically processed from a single precursor protein within the mitochondrion.

The protein localises to the mitochondrion matrix. It carries out the reaction N(2)-acetyl-L-ornithine + L-glutamate = N-acetyl-L-glutamate + L-ornithine. It catalyses the reaction L-glutamate + acetyl-CoA = N-acetyl-L-glutamate + CoA + H(+). Its pathway is amino-acid biosynthesis; L-arginine biosynthesis; L-ornithine and N-acetyl-L-glutamate from L-glutamate and N(2)-acetyl-L-ornithine (cyclic): step 1/1. The protein operates within amino-acid biosynthesis; L-arginine biosynthesis; N(2)-acetyl-L-ornithine from L-glutamate: step 1/4. Its function is as follows. Catalyzes two activities which are involved in the cyclic version of arginine biosynthesis: the synthesis of acetylglutamate from glutamate and acetyl-CoA, and of ornithine by transacetylation between acetylornithine and glutamate. The chain is Arginine biosynthesis bifunctional protein ArgJ, mitochondrial from Ajellomyces capsulatus (strain NAm1 / WU24) (Darling's disease fungus).